The chain runs to 612 residues: Mineralocorticoid receptor (612 aa).

Positions 1-228 (GNEIADSTVS…STGPSRPSKV (228 aa)) are modulating. 8 residues coordinate Zn(2+): cysteine 229, cysteine 232, cysteine 246, cysteine 249, cysteine 269, cysteine 275, cysteine 285, and cysteine 288. 2 NR C4-type zinc fingers span residues 229–249 (CLVC…CGSC) and 269–293 (CAGR…LQKC). The segment at residues 229–298 (CLVCGDEASG…RLQKCLQAGM (70 aa)) is a DNA-binding region (nuclear receptor). The hinge stretch occupies residues 299-349 (NLGARKSKKLGKLKGVHEEHPQQPLQQTPTASPKEDTTLTSSSKEPSANSN). Positions 310 to 348 (KLKGVHEEHPQQPLQQTPTASPKEDTTLTSSSKEPSANS) are disordered. Residues 339–348 (SSSKEPSANS) are compositionally biased toward low complexity. One can recognise an NR LBD domain in the interval 350-592 (SLVPLISAVS…EFPAMLVEII (243 aa)). 21-hydroxyprogesterone-binding residues include asparagine 398 and glutamine 404. 2 residues coordinate aldosterone: asparagine 398 and glutamine 404. Residues asparagine 398 and glutamine 404 each coordinate progesterone. The interval 410 to 413 (KWAK) is important for coactivator binding. Positions 445 and 573 each coordinate 21-hydroxyprogesterone. Residues arginine 445 and threonine 573 each coordinate aldosterone. The progesterone site is built by arginine 445 and threonine 573.

This sequence belongs to the nuclear hormone receptor family. NR3 subfamily.

It is found in the cytoplasm. The protein localises to the nucleus. Functionally, receptor for both mineralocorticoids (MC) such as aldosterone and glucocorticoids (GC) such as corticosterone or cortisol. Binds to mineralocorticoid response elements (MRE) and transactivates target genes. The effect of MC is to increase ion and water transport and thus raise extracellular fluid volume and blood pressure and lower potassium levels. This chain is Mineralocorticoid receptor (nr3c2), found in Xenopus laevis (African clawed frog).